The sequence spans 88 residues: Putative defensin-like protein 264 (88 aa).

An N-terminal signal peptide occupies residues 1-26 (MEKMVLRKVVLLAILLSLSCLWVAKA). 3 disulfide bridges follow: C47–C65, C53–C70, and C57–C72.

Belongs to the DEFL family.

The protein localises to the secreted. The protein is Putative defensin-like protein 264 of Arabidopsis thaliana (Mouse-ear cress).